The primary structure comprises 233 residues: U2 small nuclear ribonucleoprotein A' (233 aa).

LRR repeat units lie at residues 20 to 40 (KLTLLLRDLQITELENLAITQ), 42 to 63 (KYQVIDLSNNDLISLGNIPKRF), 65 to 86 (NLQCLLLSNNNISYIDDESFPS), and 89 to 110 (HITSITLFNNNIYQFQKSFKDK). Residues 122–160 (NPITEMENYRYFIIWLIPSLKVLDFKKVKQAERKTSEDM) enclose the LRRCT domain.

Belongs to the U2 small nuclear ribonucleoprotein A family. Associated with the spliceosome.

The protein resides in the nucleus. Its function is as follows. Involved in pre-mRNA splicing. The protein is U2 small nuclear ribonucleoprotein A' (LEA1) of Candida albicans (strain SC5314 / ATCC MYA-2876) (Yeast).